The chain runs to 296 residues: Co-chaperone protein DjlA (296 aa).

Residues 1 to 15 are Periplasmic-facing; it reads MNLRDFFVITTWWGK. The chain crosses the membrane as a helical span at residues 16-39; sequence ILGAFFGYLTAGPVGALFGILVGN. The Cytoplasmic portion of the chain corresponds to 40-296; the sequence is FFDRGLVSYY…YELICETKGW (257 aa). Residues 200 to 225 form a disordered region; it reads QHYHNQQEYKHTSSSQGQQGYKPQSP. A compositionally biased stretch (polar residues) spans 211–221; it reads TSSSQGQQGYK. The region spanning 231 to 296 is the J domain; sequence HAFALLEVSP…YELICETKGW (66 aa).

In terms of assembly, homodimer.

The protein resides in the cell inner membrane. In terms of biological role, regulatory DnaK co-chaperone. Direct interaction between DnaK and DjlA is needed for the induction of the wcaABCDE operon, involved in the synthesis of a colanic acid polysaccharide capsule, possibly through activation of the RcsB/RcsC phosphotransfer signaling pathway. The colanic acid capsule may help the bacterium survive conditions outside the host. The sequence is that of Co-chaperone protein DjlA from Legionella pneumophila subsp. pneumophila (strain Philadelphia 1 / ATCC 33152 / DSM 7513).